We begin with the raw amino-acid sequence, 598 residues long: Glutamine--fructose-6-phosphate aminotransferase [isomerizing] (598 aa).

Cysteine 2 (nucleophile; for GATase activity) is an active-site residue. A Glutamine amidotransferase type-2 domain is found at 2-219; the sequence is CGIIGYIGPR…DGEYGIVSKD (218 aa). SIS domains follow at residues 280–420 and 449–588; these read VAEL…LVGI and IAVK…PDRP. Catalysis depends on lysine 593, which acts as the For Fru-6P isomerization activity.

In terms of assembly, homodimer.

The protein localises to the cytoplasm. It carries out the reaction D-fructose 6-phosphate + L-glutamine = D-glucosamine 6-phosphate + L-glutamate. In terms of biological role, catalyzes the first step in hexosamine metabolism, converting fructose-6P into glucosamine-6P using glutamine as a nitrogen source. This Pyrococcus horikoshii (strain ATCC 700860 / DSM 12428 / JCM 9974 / NBRC 100139 / OT-3) protein is Glutamine--fructose-6-phosphate aminotransferase [isomerizing].